A 1437-amino-acid polypeptide reads, in one-letter code: DNA polymerase III PolC-type (1437 aa).

The 157-residue stretch at 420–576 (YVIFDVETTG…YDSETTGHLC (157 aa)) folds into the Exonuclease domain.

It belongs to the DNA polymerase type-C family. PolC subfamily.

It is found in the cytoplasm. It catalyses the reaction DNA(n) + a 2'-deoxyribonucleoside 5'-triphosphate = DNA(n+1) + diphosphate. In terms of biological role, required for replicative DNA synthesis. This DNA polymerase also exhibits 3' to 5' exonuclease activity. The chain is DNA polymerase III PolC-type from Pediococcus pentosaceus (strain ATCC 25745 / CCUG 21536 / LMG 10740 / 183-1w).